The primary structure comprises 492 residues: Solute carrier family 2, facilitated glucose transporter member 1 (492 aa).

Met1 is subject to N-acetylmethionine. The Cytoplasmic portion of the chain corresponds to Met1–Arg11. The helical transmembrane segment at Leu12–Ile33 threads the bilayer. The Extracellular segment spans residues Asn34–Ser66. A glycan (N-linked (GlcNAc...) asparagine) is linked at Asn45. A helical transmembrane segment spans residues Leu67–Val87. Residues Asn88–Phe90 lie on the Cytoplasmic side of the membrane. Residues Gly91 to Phe112 form a helical membrane-spanning segment. The Extracellular segment spans residues Ser113–Glu120. Residues Met121–Val144 traverse the membrane as a helical segment. Over Gly145–Ala155 the chain is Cytoplasmic. Residues Leu156–Leu176 form a helical membrane-spanning segment. Residue Gln161 participates in D-glucose binding. Topologically, residues Asp177–Leu185 are extracellular. A helical membrane pass occupies residues Trp186–Leu206. The Cytoplasmic portion of the chain corresponds to Cys207–Pro271. Ser226 is modified (phosphoserine). A helical transmembrane segment spans residues Ile272–Tyr293. Residues Gln282–Gln283 and Asn288 contribute to the D-glucose site. Residues Ser294 to Pro306 lie on the Extracellular side of the membrane. A helical transmembrane segment spans residues Val307–Val328. Asn317 is a D-glucose binding site. Topologically, residues Glu329–Arg334 are cytoplasmic. The chain crosses the membrane as a helical span at residues Thr335 to Leu355. The Extracellular segment spans residues Ala356–Ser365. Residues Tyr366 to Trp388 form a helical membrane-spanning segment. D-glucose-binding residues include Glu380 and Trp388. Residues Phe389 to Pro401 are Cytoplasmic-facing. The helical transmembrane segment at Ala402 to Phe422 threads the bilayer. The Extracellular portion of the chain corresponds to Gln423 to Cys429. The chain crosses the membrane as a helical span at residues Gly430–Phe450. The Cytoplasmic portion of the chain corresponds to Lys451–Val492. Ser465 carries the phosphoserine modification. The interval Arg468 to Val492 is disordered. Thr478 is subject to Phosphothreonine. Ser490 carries the post-translational modification Phosphoserine.

This sequence belongs to the major facilitator superfamily. Sugar transporter (TC 2.A.1.1) family. Glucose transporter subfamily. As to quaternary structure, found in a complex with ADD2, DMTN and SLC2A1. Interacts (via C-terminus cytoplasmic region) with DMTN. Interacts with SNX27; the interaction is required when endocytosed to prevent degradation in lysosomes and promote recycling to the plasma membrane. Interacts with GIPC (via PDZ domain). Interacts with STOM. Interacts with SGTA (via Gln-rich region). Interacts with BSG. Interacts with SMIM43; the interaction may promote SLC2A1-mediated glucose transport to meet the energy needs of mesendoderm differentiation. Phosphorylation at Ser-226 by PKC promotes glucose uptake by increasing cell membrane localization.

It localises to the cell membrane. The protein resides in the photoreceptor inner segment. It catalyses the reaction D-glucose(out) = D-glucose(in). The uptake of glucose is inhibited by cytochalasin B. Glucose uptake is increased in response to phorbol ester 12-O-tetradecanoylphorbol-13-acetate (TPA) treatment: TPA-induced glucose uptake requires phosphorylation at Ser-226. Functionally, facilitative glucose transporter, which is responsible for constitutive or basal glucose uptake. Has a very broad substrate specificity; can transport a wide range of aldoses including both pentoses and hexoses. Most important energy carrier of the brain: present at the blood-brain barrier and assures the energy-independent, facilitative transport of glucose into the brain. In association with BSG and NXNL1, promotes retinal cone survival by increasing glucose uptake into photoreceptors. Required for mesendoderm differentiation. This Oryctolagus cuniculus (Rabbit) protein is Solute carrier family 2, facilitated glucose transporter member 1.